Consider the following 338-residue polypeptide: NADPH dehydrogenase (338 aa).

23–26 (SPMC) lines the FMN pocket. Substrate is bound at residue tyrosine 28. FMN contacts are provided by alanine 60 and glutamine 102. 163–166 (HGAH) contacts substrate. Residues arginine 214 and 306-307 (AR) each bind FMN.

The protein belongs to the NADH:flavin oxidoreductase/NADH oxidase family. NamA subfamily. Homotetramer. Requires FMN as cofactor.

The enzyme catalyses A + NADPH + H(+) = AH2 + NADP(+). Catalyzes the reduction of the double bond of an array of alpha,beta-unsaturated aldehydes and ketones. It also reduces the nitro group of nitroester and nitroaromatic compounds. It could have a role in detoxification processes. This is NADPH dehydrogenase from Halalkalibacterium halodurans (strain ATCC BAA-125 / DSM 18197 / FERM 7344 / JCM 9153 / C-125) (Bacillus halodurans).